The sequence spans 113 residues: Gigasin-5 (113 aa).

As to expression, component of the organic matrix of calcified shell layers.

The chain is Gigasin-5 from Magallana gigas (Pacific oyster).